A 126-amino-acid chain; its full sequence is Ribosome-binding factor A (126 aa).

The protein belongs to the RbfA family. As to quaternary structure, monomer. Binds 30S ribosomal subunits, but not 50S ribosomal subunits or 70S ribosomes.

Its subcellular location is the cytoplasm. One of several proteins that assist in the late maturation steps of the functional core of the 30S ribosomal subunit. Associates with free 30S ribosomal subunits (but not with 30S subunits that are part of 70S ribosomes or polysomes). Required for efficient processing of 16S rRNA. May interact with the 5'-terminal helix region of 16S rRNA. The protein is Ribosome-binding factor A of Histophilus somni (strain 129Pt) (Haemophilus somnus).